The sequence spans 126 residues: Large ribosomal subunit protein bL12 (126 aa).

This sequence belongs to the bacterial ribosomal protein bL12 family. Homodimer. Part of the ribosomal stalk of the 50S ribosomal subunit. Forms a multimeric L10(L12)X complex, where L10 forms an elongated spine to which 2 to 4 L12 dimers bind in a sequential fashion. Binds GTP-bound translation factors.

Its function is as follows. Forms part of the ribosomal stalk which helps the ribosome interact with GTP-bound translation factors. Is thus essential for accurate translation. The protein is Large ribosomal subunit protein bL12 of Chlorobaculum tepidum (strain ATCC 49652 / DSM 12025 / NBRC 103806 / TLS) (Chlorobium tepidum).